Here is a 794-residue protein sequence, read N- to C-terminus: Mitochondrial intermediate peptidase (794 aa).

The transit peptide at 1–39 (MRVTSSRLLQGGSLVSRVLKRRLNNASRTKKGWFSTRTL) directs the protein to the mitochondrion. His581 contacts Zn(2+). Glu582 is an active-site residue. Residues His585 and His588 each coordinate Zn(2+).

Belongs to the peptidase M3 family. Zn(2+) serves as cofactor.

It localises to the mitochondrion matrix. It carries out the reaction Release of an N-terminal octapeptide as second stage of processing of some proteins imported into the mitochondrion.. In terms of biological role, cleaves proteins, imported into the mitochondrion, to their mature size. While most mitochondrial precursor proteins are processed to the mature form in one step by mitochondrial processing peptidase (MPP), the sequential cleavage by MIP of an octapeptide after initial processing by MPP is a required step for a subgroup of nuclear-encoded precursor proteins destined for the matrix or the inner membrane. The sequence is that of Mitochondrial intermediate peptidase (OCT1) from Debaryomyces hansenii (strain ATCC 36239 / CBS 767 / BCRC 21394 / JCM 1990 / NBRC 0083 / IGC 2968) (Yeast).